Reading from the N-terminus, the 87-residue chain is Toxin ICK-42 (87 aa).

An N-terminal signal peptide occupies residues 1 to 19; the sequence is MKPIVYMLLFCAFTVVILG. Intrachain disulfides connect Cys-40/Cys-54, Cys-40/Cys-77, Cys-53/Cys-66, and Cys-80/Cys-87.

The protein belongs to the neurotoxin 27 (Jztx-72) family. ICK-41 subfamily. In terms of tissue distribution, expressed by the venom gland.

The protein resides in the secreted. Probable neurotoxin with ion channel impairing activity. This chain is Toxin ICK-42, found in Trittame loki (Brush-footed trapdoor spider).